Consider the following 296-residue polypeptide: Protoheme IX farnesyltransferase (296 aa).

9 consecutive transmembrane segments (helical) span residues 8–28 (VTKPGIIFGNLISVVGGFLLA), 35–55 (YPLFLATLVGVSLVVASGCVF), 84–104 (VSLVYATALGIAGFALLYIGA), 107–127 (LAMWLAVMGFVVYVGVYSLYM), 132–152 (VYGTLIGSLSGAAPPVIGYCA), 162–182 (LILLAIFSLWQMPHSYAIAIF), 208–228 (ITVYIVAFMIATLMLTLGGYA), 229–249 (GYKYLIVAAAVSVWWLGMALR), and 263–283 (LFVFSIVAITSLSVMMSIDFS).

It belongs to the UbiA prenyltransferase family. Protoheme IX farnesyltransferase subfamily.

The protein localises to the cell inner membrane. The catalysed reaction is heme b + (2E,6E)-farnesyl diphosphate + H2O = Fe(II)-heme o + diphosphate. The protein operates within porphyrin-containing compound metabolism; heme O biosynthesis; heme O from protoheme: step 1/1. Its function is as follows. Converts heme B (protoheme IX) to heme O by substitution of the vinyl group on carbon 2 of heme B porphyrin ring with a hydroxyethyl farnesyl side group. This chain is Protoheme IX farnesyltransferase, found in Serratia proteamaculans (strain 568).